A 378-amino-acid polypeptide reads, in one-letter code: N-acetyldiaminopimelate deacetylase (378 aa).

The active site involves Asp-65. Catalysis depends on Glu-124, which acts as the Proton acceptor.

This sequence belongs to the peptidase M20A family. N-acetyldiaminopimelate deacetylase subfamily.

The enzyme catalyses N-acetyl-(2S,6S)-2,6-diaminopimelate + H2O = (2S,6S)-2,6-diaminopimelate + acetate. It functions in the pathway amino-acid biosynthesis; L-lysine biosynthesis via DAP pathway; LL-2,6-diaminopimelate from (S)-tetrahydrodipicolinate (acetylase route): step 3/3. Functionally, catalyzes the conversion of N-acetyl-diaminopimelate to diaminopimelate and acetate. The sequence is that of N-acetyldiaminopimelate deacetylase from Anoxybacillus flavithermus (strain DSM 21510 / WK1).